A 348-amino-acid chain; its full sequence is MERPEAGGINSNECENVSRKKKMSEEFEANTMDSLVDMPFATVDIQDDCGITDEPQINLKRSQENEWVKSDQVKKRKKKRKDYQPNYFLSIPITNKEIIKGIKILQNAIIQQDERLAKAMVSDGSFHITLLVMQLLNEDEVNIGIDALLELKPFIEELLQGKHLTLPFQGIGTFGNQVGFVKLAEGDHVNSLLEIAETANRTFQEKGILVGESRSFKPHLTFMKLSKSPWLRKNGVKKIDPDLYEKFISHRFGEEILYRIDLCSMLKKKQSNGYYHCESSIVIGEKNGGEPDDAELVRLSKRLVENAVLKAVQQYLEETQNKNKPGEGSSVKTEAADQNGNDNENNRK.

A disordered region spans residues 1–25 (MERPEAGGINSNECENVSRKKKMSE). AMP is bound by residues T129 and 219 to 221 (HLT). CMP-binding positions include T129 and 219-221 (HLT). The interval 294–348 (AELVRLSKRLVENAVLKAVQQYLEETQNKNKPGEGSSVKTEAADQNGNDNENNRK) is PKA-RII-alpha subunit binding domain. Positions 295–319 (ELVRLSKRLVENAVLKAVQQYLEET) are RI-alpha-binding. The interval 296–309 (LVRLSKRLVENAVL) is RII-binding. Positions 316-348 (LEETQNKNKPGEGSSVKTEAADQNGNDNENNRK) are disordered. Residues 330–348 (SVKTEAADQNGNDNENNRK) are compositionally biased toward polar residues.

As to quaternary structure, binds cAMP-dependent protein kinase (PKA). Interacts with PRKCA; only the cytoplasmic form is capable of interacting with PRKCA. In terms of tissue distribution, expressed in brain, heart, lung, pancreas and placenta.

It is found in the nucleus. The protein localises to the cytoplasm. Probably targets cAMP-dependent protein kinase (PKA) to the cellular membrane or cytoskeletal structures. The membrane-associated form reduces epithelial sodium channel (ENaC) activity, whereas the free cytoplasmic form may negatively regulate ENaC channel feedback inhibition by intracellular sodium. This is A-kinase anchor protein 7 isoform gamma (AKAP7) from Homo sapiens (Human).